Consider the following 122-residue polypeptide: Large ribosomal subunit protein uL14 (122 aa).

The protein belongs to the universal ribosomal protein uL14 family. As to quaternary structure, part of the 50S ribosomal subunit. Forms a cluster with proteins L3 and L19. In the 70S ribosome, L14 and L19 interact and together make contacts with the 16S rRNA in bridges B5 and B8.

In terms of biological role, binds to 23S rRNA. Forms part of two intersubunit bridges in the 70S ribosome. This chain is Large ribosomal subunit protein uL14, found in Malacoplasma penetrans (strain HF-2) (Mycoplasma penetrans).